A 563-amino-acid chain; its full sequence is Putative cysteine ligase BshC (563 aa).

Residues 474–506 are a coiled coil; sequence LEQSLMGTSKQAEKALDTLRQKTQRANRRKHDE.

The protein belongs to the BshC family.

This chain is Putative cysteine ligase BshC, found in Prosthecochloris aestuarii (strain DSM 271 / SK 413).